Here is a 498-residue protein sequence, read N- to C-terminus: Probable lysophospholipase BODYGUARD 3 (498 aa).

Positions 1–55 (MAVMKIKGAATVAGTWLNEAVSFVVFCILDIVDSFLCLLYKAADYLFEAEWKPCY) are cleaved as a signal peptide. Cysteine 56 carries the N-palmitoyl cysteine lipid modification. Positions 220–326 (VLFIHGFISS…LTLLAPPYYP (107 aa)) constitute an AB hydrolase-1 domain. Residue histidine 224 is part of the active site. Serine 297 functions as the Nucleophile in the catalytic mechanism. Residues aspartate 446 and histidine 474 each act as charge relay system in the active site.

The protein localises to the cell membrane. It is found in the secreted. It localises to the cell wall. Involved in cuticle development and morphogenesis. This chain is Probable lysophospholipase BODYGUARD 3, found in Arabidopsis thaliana (Mouse-ear cress).